A 232-amino-acid chain; its full sequence is Orotidine 5'-phosphate decarboxylase (232 aa).

Substrate is bound by residues D11, K32, 59–68 (DLKFHDIPNT), T118, R180, Q189, G209, and R210. The Proton donor role is filled by K61.

It belongs to the OMP decarboxylase family. Type 1 subfamily. Homodimer.

It carries out the reaction orotidine 5'-phosphate + H(+) = UMP + CO2. It functions in the pathway pyrimidine metabolism; UMP biosynthesis via de novo pathway; UMP from orotate: step 2/2. Functionally, catalyzes the decarboxylation of orotidine 5'-monophosphate (OMP) to uridine 5'-monophosphate (UMP). The protein is Orotidine 5'-phosphate decarboxylase of Gloeothece citriformis (strain PCC 7424) (Cyanothece sp. (strain PCC 7424)).